The following is a 156-amino-acid chain: Ribosomal RNA large subunit methyltransferase H (156 aa).

Residues Leu-73, Gly-104, and 123–128 contribute to the S-adenosyl-L-methionine site; that span reads ISSMTL.

Belongs to the RNA methyltransferase RlmH family. In terms of assembly, homodimer.

Its subcellular location is the cytoplasm. It carries out the reaction pseudouridine(1915) in 23S rRNA + S-adenosyl-L-methionine = N(3)-methylpseudouridine(1915) in 23S rRNA + S-adenosyl-L-homocysteine + H(+). Functionally, specifically methylates the pseudouridine at position 1915 (m3Psi1915) in 23S rRNA. This Burkholderia ambifaria (strain ATCC BAA-244 / DSM 16087 / CCUG 44356 / LMG 19182 / AMMD) (Burkholderia cepacia (strain AMMD)) protein is Ribosomal RNA large subunit methyltransferase H.